Here is a 184-residue protein sequence, read N- to C-terminus: Holliday junction branch migration complex subunit RuvA (184 aa).

The tract at residues 1 to 64 (MIRAIEGIIT…EDANLLYGFL (64 aa)) is domain I. Residues 65–144 (DTNEQKMFEM…SDESVPGYQN (80 aa)) are domain II. N144 is a region of interest (flexible linker). The domain III stretch occupies residues 144–184 (NEALLALEALGFKREKIVKILPDLKSTSTSELVKEALKKLA).

The protein belongs to the RuvA family. In terms of assembly, homotetramer. Forms an RuvA(8)-RuvB(12)-Holliday junction (HJ) complex. HJ DNA is sandwiched between 2 RuvA tetramers; dsDNA enters through RuvA and exits via RuvB. An RuvB hexamer assembles on each DNA strand where it exits the tetramer. Each RuvB hexamer is contacted by two RuvA subunits (via domain III) on 2 adjacent RuvB subunits; this complex drives branch migration. In the full resolvosome a probable DNA-RuvA(4)-RuvB(12)-RuvC(2) complex forms which resolves the HJ.

The protein resides in the cytoplasm. Its function is as follows. The RuvA-RuvB-RuvC complex processes Holliday junction (HJ) DNA during genetic recombination and DNA repair, while the RuvA-RuvB complex plays an important role in the rescue of blocked DNA replication forks via replication fork reversal (RFR). RuvA specifically binds to HJ cruciform DNA, conferring on it an open structure. The RuvB hexamer acts as an ATP-dependent pump, pulling dsDNA into and through the RuvAB complex. HJ branch migration allows RuvC to scan DNA until it finds its consensus sequence, where it cleaves and resolves the cruciform DNA. This Campylobacter curvus (strain 525.92) protein is Holliday junction branch migration complex subunit RuvA.